The primary structure comprises 131 residues: Large ribosomal subunit protein bL12 (131 aa).

It belongs to the bacterial ribosomal protein bL12 family. As to quaternary structure, homodimer. Part of the ribosomal stalk of the 50S ribosomal subunit. Forms a multimeric L10(L12)X complex, where L10 forms an elongated spine to which 2 to 4 L12 dimers bind in a sequential fashion. Binds GTP-bound translation factors.

Functionally, forms part of the ribosomal stalk which helps the ribosome interact with GTP-bound translation factors. Is thus essential for accurate translation. The chain is Large ribosomal subunit protein bL12 from Tropheryma whipplei (strain Twist) (Whipple's bacillus).